A 197-amino-acid polypeptide reads, in one-letter code: Large ribosomal subunit protein uL18 (197 aa).

It belongs to the universal ribosomal protein uL18 family. Part of the 50S ribosomal subunit. Contacts the 5S and 23S rRNAs.

This is one of the proteins that bind and probably mediate the attachment of the 5S RNA into the large ribosomal subunit, where it forms part of the central protuberance. This is Large ribosomal subunit protein uL18 from Sulfolobus acidocaldarius (strain ATCC 33909 / DSM 639 / JCM 8929 / NBRC 15157 / NCIMB 11770).